The following is a 276-amino-acid chain: Rhomboid protease GlpG (276 aa).

6 helical membrane-spanning segments follow: residues 94–114 (GPVTWVMMIACVVVFIAMQIL), 142–162 (ALMHFSLMHILFNLLWWWYLG), 169–189 (LGSGKLIVITLISALLSGYVQ), 192–212 (FSGPWFGGLSGVVYALMGYVW), 229–249 (LIIFALIWIVAGWFDLFGMSM), and 250–270 (ANGAHIAGLAVGLAMAFVDSL). Residue serine 201 is the Nucleophile of the active site. Residue histidine 254 is part of the active site.

The protein belongs to the peptidase S54 family.

It localises to the cell inner membrane. The catalysed reaction is Cleaves type-1 transmembrane domains using a catalytic dyad composed of serine and histidine that are contributed by different transmembrane domains.. Its function is as follows. Rhomboid-type serine protease that catalyzes intramembrane proteolysis. This Escherichia coli O81 (strain ED1a) protein is Rhomboid protease GlpG.